The following is a 499-amino-acid chain: Glutelin type-B 1 (499 aa).

A signal peptide spans 1–24; it reads MASSVFSRFSIYFCVLLLCHGSMA. 2 disulfides stabilise this stretch: Cys-45–Cys-78 and Cys-121–Cys-309. 2 consecutive Cupin type-1 domains span residues 50–247 and 315–464; these read LQAF…VAAK and VNIE…EQAR. The interval 467 to 499 is disordered; that stretch reads KNNRGEEHGAFTPRFQQQYYPGLSNESESETSE.

The protein belongs to the 11S seed storage protein (globulins) family. In terms of assembly, hexamer; each subunit is composed of an acidic and a basic chain derived from a single precursor and linked by a disulfide bond.

Seed storage protein. The protein is Glutelin type-B 1 (GluB1-A) of Oryza sativa subsp. japonica (Rice).